A 238-amino-acid polypeptide reads, in one-letter code: Ribonuclease 3 (238 aa).

Residues 17 to 140 (YATLEKALGY…LMAGVYLEAG (124 aa)) enclose the RNase III domain. Glu53 serves as a coordination point for Mg(2+). Asp57 is a catalytic residue. Mg(2+) is bound by residues Ser126 and Glu129. The active site involves Glu129. The region spanning 167 to 236 (DYKTALQELT…AYQALQKLKE (70 aa)) is the DRBM domain.

The protein belongs to the ribonuclease III family. As to quaternary structure, homodimer. Requires Mg(2+) as cofactor.

It localises to the cytoplasm. The enzyme catalyses Endonucleolytic cleavage to 5'-phosphomonoester.. Its function is as follows. Digests double-stranded RNA. Involved in the processing of primary rRNA transcript to yield the immediate precursors to the large and small rRNAs (23S and 16S). Processes some mRNAs, and tRNAs when they are encoded in the rRNA operon. Processes pre-crRNA and tracrRNA of type II CRISPR loci if present in the organism. This Helicobacter pylori (strain Shi470) protein is Ribonuclease 3.